We begin with the raw amino-acid sequence, 353 residues long: Uroporphyrinogen decarboxylase (353 aa).

Substrate-binding positions include 29–33 (RQAGR), Asp-78, Tyr-154, Ser-209, and His-322.

This sequence belongs to the uroporphyrinogen decarboxylase family. In terms of assembly, homodimer.

The protein localises to the cytoplasm. The catalysed reaction is uroporphyrinogen III + 4 H(+) = coproporphyrinogen III + 4 CO2. It participates in porphyrin-containing compound metabolism; protoporphyrin-IX biosynthesis; coproporphyrinogen-III from 5-aminolevulinate: step 4/4. Functionally, catalyzes the decarboxylation of four acetate groups of uroporphyrinogen-III to yield coproporphyrinogen-III. This is Uroporphyrinogen decarboxylase from Bacillus velezensis (strain DSM 23117 / BGSC 10A6 / LMG 26770 / FZB42) (Bacillus amyloliquefaciens subsp. plantarum).